The primary structure comprises 481 residues: Protein nucleotidyltransferase YdiU (481 aa).

The ATP site is built by Gly-85, Gly-87, Arg-88, Lys-108, Asp-120, Gly-121, Arg-172, and Arg-179. Catalysis depends on Asp-248, which acts as the Proton acceptor. Asn-249 and Asp-258 together coordinate Mg(2+). ATP is bound at residue Asp-258.

The protein belongs to the SELO family. Mg(2+) serves as cofactor. The cofactor is Mn(2+).

The enzyme catalyses L-seryl-[protein] + ATP = 3-O-(5'-adenylyl)-L-seryl-[protein] + diphosphate. It catalyses the reaction L-threonyl-[protein] + ATP = 3-O-(5'-adenylyl)-L-threonyl-[protein] + diphosphate. It carries out the reaction L-tyrosyl-[protein] + ATP = O-(5'-adenylyl)-L-tyrosyl-[protein] + diphosphate. The catalysed reaction is L-histidyl-[protein] + UTP = N(tele)-(5'-uridylyl)-L-histidyl-[protein] + diphosphate. The enzyme catalyses L-seryl-[protein] + UTP = O-(5'-uridylyl)-L-seryl-[protein] + diphosphate. It catalyses the reaction L-tyrosyl-[protein] + UTP = O-(5'-uridylyl)-L-tyrosyl-[protein] + diphosphate. In terms of biological role, nucleotidyltransferase involved in the post-translational modification of proteins. It can catalyze the addition of adenosine monophosphate (AMP) or uridine monophosphate (UMP) to a protein, resulting in modifications known as AMPylation and UMPylation. This is Protein nucleotidyltransferase YdiU from Cereibacter sphaeroides (strain KD131 / KCTC 12085) (Rhodobacter sphaeroides).